The sequence spans 335 residues: Pro-cathepsin H (335 aa).

Positions 1 to 22 are cleaved as a signal peptide; the sequence is MWATLPLLCAGAWLLGVPVCGA. A propeptide spans 23–97 (activation peptide); sequence AELCVNSLEK…AEIKHKYLWS (75 aa). Residue Asn101 is glycosylated (N-linked (GlcNAc...) asparagine). 4 disulfide bridges follow: Cys102–Cys327, Cys138–Cys181, Cys172–Cys214, and Cys272–Cys322. Positions 106–115 are excised as a propeptide; it reads KSNYLRGTGP. The active site involves Cys141. Asn230 is a glycosylation site (N-linked (GlcNAc...) asparagine). Active-site residues include His281 and Asn301.

Belongs to the peptidase C1 family. As to quaternary structure, composed of a mini chain and a large chain. The large chain may be split into heavy and light chain. All chains are held together by disulfide bonds.

The protein localises to the lysosome. The catalysed reaction is Hydrolysis of proteins, acting as an aminopeptidase (notably, cleaving Arg-|-Xaa bonds) as well as an endopeptidase.. In terms of biological role, important for the overall degradation of proteins in lysosomes. The protein is Pro-cathepsin H (CTSH) of Homo sapiens (Human).